Here is a 363-residue protein sequence, read N- to C-terminus: Probable L-tyrosine/L-aspartate decarboxylase (363 aa).

An N6-(pyridoxal phosphate)lysine modification is found at lysine 208.

The protein belongs to the group II decarboxylase family. MfnA subfamily. The cofactor is pyridoxal 5'-phosphate.

The catalysed reaction is L-tyrosine + H(+) = tyramine + CO2. It catalyses the reaction L-aspartate + H(+) = beta-alanine + CO2. It functions in the pathway cofactor biosynthesis; methanofuran biosynthesis. Its pathway is cofactor biosynthesis; coenzyme A biosynthesis. Its function is as follows. Catalyzes the decarboxylation of L-tyrosine to produce tyramine for methanofuran biosynthesis. Can also catalyze the decarboxylation of L-aspartate to produce beta-alanine for coenzyme A (CoA) biosynthesis. The polypeptide is Probable L-tyrosine/L-aspartate decarboxylase (Methanothermobacter thermautotrophicus (strain ATCC 29096 / DSM 1053 / JCM 10044 / NBRC 100330 / Delta H) (Methanobacterium thermoautotrophicum)).